We begin with the raw amino-acid sequence, 374 residues long: Deoxyguanosinetriphosphate triphosphohydrolase-like protein (374 aa).

One can recognise an HD domain in the interval 65 to 196; the sequence is RLTHSLEVAQ…ANLADEIAYN (132 aa).

Belongs to the dGTPase family. Type 2 subfamily.

The sequence is that of Deoxyguanosinetriphosphate triphosphohydrolase-like protein (dgt) from Nitrosomonas europaea (strain ATCC 19718 / CIP 103999 / KCTC 2705 / NBRC 14298).